A 178-amino-acid chain; its full sequence is ATP synthase subunit b (178 aa).

The helical transmembrane segment at 19–39 (ITGIGFVILLFIAIKYIVPAF) threads the bilayer.

The protein belongs to the ATPase B chain family. F-type ATPases have 2 components, F(1) - the catalytic core - and F(0) - the membrane proton channel. F(1) has five subunits: alpha(3), beta(3), gamma(1), delta(1), epsilon(1). F(0) has three main subunits: a(1), b(2) and c(10-14). The alpha and beta chains form an alternating ring which encloses part of the gamma chain. F(1) is attached to F(0) by a central stalk formed by the gamma and epsilon chains, while a peripheral stalk is formed by the delta and b chains.

The protein resides in the cell membrane. F(1)F(0) ATP synthase produces ATP from ADP in the presence of a proton or sodium gradient. F-type ATPases consist of two structural domains, F(1) containing the extramembraneous catalytic core and F(0) containing the membrane proton channel, linked together by a central stalk and a peripheral stalk. During catalysis, ATP synthesis in the catalytic domain of F(1) is coupled via a rotary mechanism of the central stalk subunits to proton translocation. Functionally, component of the F(0) channel, it forms part of the peripheral stalk, linking F(1) to F(0). This Kocuria rhizophila (strain ATCC 9341 / DSM 348 / NBRC 103217 / DC2201) protein is ATP synthase subunit b.